The following is a 1200-amino-acid chain: ATP-dependent helicase/deoxyribonuclease subunit B (1200 aa).

The protein belongs to the helicase family. AddB/RexB type 2 subfamily. Heterodimer of AddA and RexB. Mg(2+) serves as cofactor.

Functionally, the heterodimer acts as both an ATP-dependent DNA helicase and an ATP-dependent, dual-direction single-stranded exonuclease. Recognizes the chi site generating a DNA molecule suitable for the initiation of homologous recombination. This subunit has 5' -&gt; 3' nuclease activity but not helicase activity. This chain is ATP-dependent helicase/deoxyribonuclease subunit B, found in Lactiplantibacillus plantarum (strain ATCC BAA-793 / NCIMB 8826 / WCFS1) (Lactobacillus plantarum).